The following is a 321-amino-acid chain: Aldose reductase C (321 aa).

22 to 31 (GNQIPSIGLG) is an NADP(+) binding site. The active-site Proton donor is the Tyr-62. Position 124 (His-124) interacts with substrate. Residue 227 to 281 (SPLGQGKCDFFSNKILKSIAGKYKKSVANVIFKWLNQRGIAAIPKSGNHSRIIEN) participates in NADP(+) binding.

This sequence belongs to the aldo/keto reductase family.

It carries out the reaction an alditol + NAD(+) = an aldose + NADH + H(+). The catalysed reaction is an alditol + NADP(+) = an aldose + NADPH + H(+). Its function is as follows. Catalyzes the NADPH-dependent reduction of a wide variety of carbonyl-containing compounds to their corresponding alcohols with a broad range of catalytic efficiencies. The protein is Aldose reductase C (alrC) of Dictyostelium discoideum (Social amoeba).